The sequence spans 246 residues: 2,5-diamino-6-ribosylamino-4(3H)-pyrimidinone 5'-phosphate reductase (246 aa).

NADP(+) is bound by residues threonine 78, aspartate 82, leucine 163, and 186–190 (GAEVL).

This sequence belongs to the HTP reductase family. As to quaternary structure, homodimer.

The catalysed reaction is 2,5-diamino-6-(1-D-ribitylamino)pyrimidin-4(3H)-one 5'-phosphate + NADP(+) = 2,5-diamino-6-(1-D-ribosylamino)pyrimidin-4(3H)-one 5'-phosphate + NADPH + H(+). The enzyme catalyses 2,5-diamino-6-(1-D-ribitylamino)pyrimidin-4(3H)-one 5'-phosphate + NAD(+) = 2,5-diamino-6-(1-D-ribosylamino)pyrimidin-4(3H)-one 5'-phosphate + NADH + H(+). It participates in cofactor biosynthesis; riboflavin biosynthesis. Catalyzes an early step in riboflavin biosynthesis, the NADPH-dependent reduction of the ribose side chain of 2,5-diamino-6-ribosylamino-4(3H)-pyrimidinone 5'-phosphate, yielding 2,5-diamino-6-ribitylamino-4(3H)-pyrimidinone 5'-phosphate. The polypeptide is 2,5-diamino-6-ribosylamino-4(3H)-pyrimidinone 5'-phosphate reductase (RIB7) (Eremothecium gossypii (strain ATCC 10895 / CBS 109.51 / FGSC 9923 / NRRL Y-1056) (Yeast)).